A 245-amino-acid polypeptide reads, in one-letter code: Phycocyanobilin:ferredoxin oxidoreductase (245 aa).

This sequence belongs to the HY2 family.

It carries out the reaction (2R,3Z)-phycocyanobilin + 4 oxidized [2Fe-2S]-[ferredoxin] = biliverdin IXalpha + 4 reduced [2Fe-2S]-[ferredoxin] + 4 H(+). Catalyzes the four-electron reduction of biliverdin IX-alpha (2-electron reduction at both the A and D rings); the reaction proceeds via an isolatable 2-electron intermediate, 181,182-dihydrobiliverdin. In Trichodesmium erythraeum (strain IMS101), this protein is Phycocyanobilin:ferredoxin oxidoreductase.